The following is a 313-amino-acid chain: Mas-related G-protein coupled receptor member A4 (313 aa).

Residues 1 to 25 (MAPTTTNPMNETIPGSIDIETLIPN) lie on the Extracellular side of the membrane. An N-linked (GlcNAc...) asparagine glycan is attached at Asn10. Residues 26–46 (LMIIIFGLVGLTGNVILFWLL) form a helical membrane-spanning segment. At 47 to 54 (GFHLHRNA) the chain is on the cytoplasmic side. The helical transmembrane segment at 55–75 (FLVYILNLALADFLFLLCHII) threads the bilayer. A glycan (N-linked (GlcNAc...) asparagine) is linked at Asn76. At 76-93 (NSTMLLLKVHLPNNILNH) the chain is on the extracellular side. A helical transmembrane segment spans residues 94–114 (CFDIIMTVLYITGLSMLSAIS). Residues 115-137 (TERCLSVLCPIWYRCRRPEHTST) are Cytoplasmic-facing. The helical transmembrane segment at 138 to 158 (VLCAVIWFLPLLICILNGYFC) threads the bilayer. The Extracellular portion of the chain corresponds to 159 to 182 (HFFGPKYVIDSVCLATNFFIRTYP). The helical transmembrane segment at 183-203 (MFLFIVLCLSTLALLARLFCG) threads the bilayer. Residues 204–219 (AGKTKFTRLFVTIMLT) are Cytoplasmic-facing. Residues 220–240 (VLVFLLCGLPLGFFWFLVPWI) form a helical membrane-spanning segment. At 241–255 (NRDFSVLDYILFQTS) the chain is on the extracellular side. The chain crosses the membrane as a helical span at residues 256–276 (LVLTSVNSCANPIIYFFVGSF). At 277-313 (RHRLKHKTLKMVLQSALQDTPETPENMVEMSRSKAEP) the chain is on the cytoplasmic side.

The protein belongs to the G-protein coupled receptor 1 family. Mas subfamily. Expressed in a subset of sensory neurons that includes nociceptors. Expressed in the subclass of non-peptidergic sensory neurons that are IB4(+) and VR1(-).

It is found in the cell membrane. In terms of biological role, orphan receptor. May be a receptor for RFamide-family neuropeptides such as NPFF and NPAF, which are analgesic in vivo. May regulate nociceptor function and/or development, including the sensation or modulation of pain. This chain is Mas-related G-protein coupled receptor member A4 (Mrgpra4), found in Mus musculus (Mouse).